Here is a 399-residue protein sequence, read N- to C-terminus: Sister chromatid cohesion protein DCC1 (399 aa).

The protein belongs to the DCC1 family. As to quaternary structure, component of the CTF18-RFC complex which consists of CTF8, CTF18, DSCC1 and the RFC complex. Interacts with CTF8 and CTF18. Interacts with DDX11.

It localises to the nucleus. Functionally, loads PCNA onto primed templates regulating velocity, spacing and restart activity of replication forks. May couple DNA replication to sister chromatid cohesion through regulation of the acetylation of the cohesin subunit SMC3. This is Sister chromatid cohesion protein DCC1 (DSCC1) from Mus musculus (Mouse).